Consider the following 359-residue polypeptide: 24-methylenesterol C-methyltransferase 3 (359 aa).

The chain crosses the membrane as a helical span at residues 4-24; that stretch reads VALYCTAGLIAGAVYWFICVL.

This sequence belongs to the class I-like SAM-binding methyltransferase superfamily. Erg6/SMT family.

It is found in the membrane. It carries out the reaction 24-methylidenelophenol + S-adenosyl-L-methionine = (Z)-24-ethylidenelophenol + S-adenosyl-L-homocysteine + H(+). Its pathway is steroid biosynthesis; sterol biosynthesis. Its function is as follows. Catalyzes the methyl transfer from S-adenosyl-methionine to the methylene group of 24-methylene lophenol to form 24-ethylidene lophenol. This is 24-methylenesterol C-methyltransferase 3 (SMT3) from Arabidopsis thaliana (Mouse-ear cress).